The following is a 943-amino-acid chain: Isoleucine--tRNA ligase (943 aa).

Residues 58–68 (PYANGNIHIGH) carry the 'HIGH' region motif. E567 contributes to the L-isoleucyl-5'-AMP binding site. Residues 608–612 (KMSKS) carry the 'KMSKS' region motif. Position 611 (K611) interacts with ATP. Positions 906, 909, 926, and 929 each coordinate Zn(2+).

The protein belongs to the class-I aminoacyl-tRNA synthetase family. IleS type 1 subfamily. Monomer. Requires Zn(2+) as cofactor.

It is found in the cytoplasm. The catalysed reaction is tRNA(Ile) + L-isoleucine + ATP = L-isoleucyl-tRNA(Ile) + AMP + diphosphate. Functionally, catalyzes the attachment of isoleucine to tRNA(Ile). As IleRS can inadvertently accommodate and process structurally similar amino acids such as valine, to avoid such errors it has two additional distinct tRNA(Ile)-dependent editing activities. One activity is designated as 'pretransfer' editing and involves the hydrolysis of activated Val-AMP. The other activity is designated 'posttransfer' editing and involves deacylation of mischarged Val-tRNA(Ile). The chain is Isoleucine--tRNA ligase from Pseudomonas savastanoi pv. phaseolicola (strain 1448A / Race 6) (Pseudomonas syringae pv. phaseolicola (strain 1448A / Race 6)).